Here is a 504-residue protein sequence, read N- to C-terminus: Maturase K (504 aa).

It belongs to the intron maturase 2 family. MatK subfamily.

The protein localises to the plastid. Its subcellular location is the chloroplast. In terms of biological role, usually encoded in the trnK tRNA gene intron. Probably assists in splicing its own and other chloroplast group II introns. This Draba nemorosa (Woodland whitlowgrass) protein is Maturase K.